Reading from the N-terminus, the 455-residue chain is Argininosuccinate lyase (455 aa).

The protein belongs to the lyase 1 family. Argininosuccinate lyase subfamily.

It is found in the cytoplasm. The catalysed reaction is 2-(N(omega)-L-arginino)succinate = fumarate + L-arginine. Its pathway is amino-acid biosynthesis; L-arginine biosynthesis; L-arginine from L-ornithine and carbamoyl phosphate: step 3/3. This is Argininosuccinate lyase from Roseiflexus castenholzii (strain DSM 13941 / HLO8).